Here is a 483-residue protein sequence, read N- to C-terminus: Essential nuclear protein 1 (483 aa).

Disordered regions lie at residues 1–21, 33–55, 67–123, and 171–200; these read MARA…LKDL, KKKL…GYID, KEQQ…EGDY, and ESQV…GLKS. Residues 96-123 are compositionally biased toward acidic residues; sequence YDDEDEDEDEDEEAFGEDISDFEPEGDY. The residue at position 172 (Ser172) is a Phosphoserine; by ATM or ATR. Positions 174-183 are enriched in acidic residues; it reads VEDMQDDEPL. Positions 185-198 are enriched in polar residues; sequence NEQNTSRGNISSGL. Residues Ser190 and Ser404 each carry the phosphoserine modification.

It belongs to the bystin family.

Its subcellular location is the cytoplasm. The protein localises to the nucleus. It is found in the nucleolus. Required for normal export of the pre-40S particles from the nucleus to the cytoplasm. Its subcellular location and association with pre-40S subunit shifts from mixed cytoplasm/nucleus to all nuclear in RPS19 disruptions, suggesting it acts after the ribosomal protein. This chain is Essential nuclear protein 1 (ENP1), found in Saccharomyces cerevisiae (strain ATCC 204508 / S288c) (Baker's yeast).